The chain runs to 158 residues: Secreted RxLR effector protein 131 (158 aa).

An N-terminal signal peptide occupies residues 1 to 20 (MRQIPLVVVLLLAYAARLQG). A RxLR-dEER motif is present at residues 39 to 57 (RDLDGSTTSMSVNVDDEER). Residues 120–158 (KGNVKYLAIIYVICILSVLGILGTVFAINRNISNQYIHE) form a host BKI1-binding region. The chain crosses the membrane as a helical span at residues 127–147 (AIIYVICILSVLGILGTVFAI). N-linked (GlcNAc...) asparagine glycosylation is present at Asn-150.

This sequence belongs to the RxLR effector family. In terms of assembly, interacts with host BKI1.

The protein resides in the secreted. It localises to the host cell membrane. Its function is as follows. Secreted effector that suppresses pathogen-associated molecular pattern (PAMP)-triggered immunity (PTI) in host plants. Suppresses both defense-related brassinosteroid (BR) and ERECTA (ER) signaling pathways in planta by interacting with host BRI1 kinase inhibitor 1 (BKI1) at the host plasma membrane, leading to a host dwarf phenotype. The sequence is that of Secreted RxLR effector protein 131 from Plasmopara viticola (Downy mildew of grapevine).